Reading from the N-terminus, the 358-residue chain is Ion-translocating oxidoreductase complex subunit D (358 aa).

A run of 4 helical transmembrane segments spans residues 19 to 39 (IMLWVILAMMPAFFTQIYYFG), 41 to 61 (GVVLQSALAIGTAIIAEFIAI), 79 to 99 (LTALILAMAIPPYAPYWVIII), and 125 to 145 (IGYVILLISFPLQMTTWMPPI). The residue at position 186 (Thr-186) is an FMN phosphoryl threonine. 5 helical membrane passes run 220–240 (FAQGWWQINVAFLAGGIFLIL), 248–268 (IPVAMLVTFFCLATATAFTGF), 271–291 (LSAISQLVSGAMMFGAFFIAT), 297–317 (SITPRGKIIFGALVGLFVYLI), and 321–341 (GNYPDGVAFAILLSNICVPLI).

It belongs to the NqrB/RnfD family. As to quaternary structure, the complex is composed of six subunits: RnfA, RnfB, RnfC, RnfD, RnfE and RnfG. The cofactor is FMN.

Its subcellular location is the cell inner membrane. In terms of biological role, part of a membrane-bound complex that couples electron transfer with translocation of ions across the membrane. This chain is Ion-translocating oxidoreductase complex subunit D, found in Haemophilus influenzae (strain PittGG).